Here is a 198-residue protein sequence, read N- to C-terminus: Carnitine operon protein CaiE (198 aa).

Residues 179 to 198 form a disordered region; the sequence is VEENRPRLKGTTDVKPKSAQ. Residues 180-198 are compositionally biased toward basic and acidic residues; that stretch reads EENRPRLKGTTDVKPKSAQ.

This sequence belongs to the transferase hexapeptide repeat family.

It functions in the pathway amine and polyamine metabolism; carnitine metabolism. Functionally, overproduction of CaiE stimulates the activity of CaiB and CaiD. The chain is Carnitine operon protein CaiE from Salmonella choleraesuis (strain SC-B67).